We begin with the raw amino-acid sequence, 307 residues long: Putative F-box protein PP2-B6 (307 aa).

The 47-residue stretch at 42–88 (HSPFDDLPEDCISNIISFTSPRDVCVSASVSKSFAHAVQCDSIWEKF) folds into the F-box domain.

The chain is Putative F-box protein PP2-B6 (PP2B6) from Arabidopsis thaliana (Mouse-ear cress).